The chain runs to 172 residues: Thioredoxin M-type, chloroplastic (172 aa).

The N-terminal 60 residues, 1–60 (MALESLFKSIHTKTSLSSSIVFIFKGKACLLTSKSRIQESFAELNSFTSLVLLIENHVLL), are a transit peptide targeting the chloroplast. In terms of domain architecture, Thioredoxin spans 61-172 (HAREAVNEVQ…TLSEKVEKYI (112 aa)). Catalysis depends on nucleophile residues cysteine 97 and cysteine 100. An intrachain disulfide couples cysteine 97 to cysteine 100.

It belongs to the thioredoxin family. Plant M-type subfamily. As to quaternary structure, forms a complex with heterodimeric ferredoxin-thioredoxin reductase (FTR) and ferredoxin.

The protein resides in the plastid. The protein localises to the chloroplast. In terms of biological role, participates in various redox reactions through the reversible oxidation of the active center dithiol to a disulfide. The M form is known to activate NADP-malate dehydrogenase. The chain is Thioredoxin M-type, chloroplastic from Pisum sativum (Garden pea).